Consider the following 383-residue polypeptide: Cobalt-precorrin-5B C(1)-methyltransferase (383 aa).

This sequence belongs to the CbiD family.

The enzyme catalyses Co-precorrin-5B + S-adenosyl-L-methionine = Co-precorrin-6A + S-adenosyl-L-homocysteine. Its pathway is cofactor biosynthesis; adenosylcobalamin biosynthesis; cob(II)yrinate a,c-diamide from sirohydrochlorin (anaerobic route): step 6/10. Catalyzes the methylation of C-1 in cobalt-precorrin-5B to form cobalt-precorrin-6A. This Prochlorococcus marinus (strain MIT 9313) protein is Cobalt-precorrin-5B C(1)-methyltransferase.